Here is a 219-residue protein sequence, read N- to C-terminus: Small ribosomal subunit protein uS3 (219 aa).

Positions 38–106 (IRKYINTKLA…KVHINIVEIK (69 aa)) constitute a KH type-2 domain.

This sequence belongs to the universal ribosomal protein uS3 family. Part of the 30S ribosomal subunit. Forms a tight complex with proteins S10 and S14.

Functionally, binds the lower part of the 30S subunit head. Binds mRNA in the 70S ribosome, positioning it for translation. This chain is Small ribosomal subunit protein uS3, found in Latilactobacillus sakei subsp. sakei (strain 23K) (Lactobacillus sakei subsp. sakei).